The primary structure comprises 232 residues: Enolase-phosphatase E1 (232 aa).

It belongs to the HAD-like hydrolase superfamily. MasA/MtnC family. As to quaternary structure, monomer. The cofactor is Mg(2+).

The catalysed reaction is 5-methylsulfanyl-2,3-dioxopentyl phosphate + H2O = 1,2-dihydroxy-5-(methylsulfanyl)pent-1-en-3-one + phosphate. Its pathway is amino-acid biosynthesis; L-methionine biosynthesis via salvage pathway; L-methionine from S-methyl-5-thio-alpha-D-ribose 1-phosphate: step 3/6. The protein operates within amino-acid biosynthesis; L-methionine biosynthesis via salvage pathway; L-methionine from S-methyl-5-thio-alpha-D-ribose 1-phosphate: step 4/6. In terms of biological role, bifunctional enzyme that catalyzes the enolization of 2,3-diketo-5-methylthiopentyl-1-phosphate (DK-MTP-1-P) into the intermediate 2-hydroxy-3-keto-5-methylthiopentenyl-1-phosphate (HK-MTPenyl-1-P), which is then dephosphorylated to form the acireductone 1,2-dihydroxy-3-keto-5-methylthiopentene (DHK-MTPene). This is Enolase-phosphatase E1 from Xylella fastidiosa (strain Temecula1 / ATCC 700964).